The sequence spans 195 residues: Probable thymidylate kinase (195 aa).

Position 7-14 (7-14 (GIDGVGKT)) interacts with ATP.

Belongs to the thymidylate kinase family.

The catalysed reaction is dTMP + ATP = dTDP + ADP. The polypeptide is Probable thymidylate kinase (Methanosphaera stadtmanae (strain ATCC 43021 / DSM 3091 / JCM 11832 / MCB-3)).